The sequence spans 213 residues: Riboflavin synthase (213 aa).

2 Lumazine-binding repeats span residues 1 to 97 (MFTG…IGGH) and 98 to 195 (LMSG…VDTV). 2,4-dihydroxypteridine contacts are provided by residues 4–6 (GIV), 48–50 (CLT), 62–67 (DLMKET), 101–103 (GHI), Lys137, 146–148 (SLT), and 160–165 (HLIPET).

In terms of assembly, homotrimer. Unlike in B.subtilis, does not interact with 6,7-dimethyl-8-ribityllumazine synthase.

It carries out the reaction 2 6,7-dimethyl-8-(1-D-ribityl)lumazine + H(+) = 5-amino-6-(D-ribitylamino)uracil + riboflavin. It functions in the pathway cofactor biosynthesis; riboflavin biosynthesis; riboflavin from 2-hydroxy-3-oxobutyl phosphate and 5-amino-6-(D-ribitylamino)uracil: step 2/2. Its function is as follows. Catalyzes the dismutation of two molecules of 6,7-dimethyl-8-ribityllumazine, resulting in the formation of riboflavin and 5-amino-6-(D-ribitylamino)uracil. In Escherichia coli (strain K12), this protein is Riboflavin synthase (ribC).